Reading from the N-terminus, the 38-residue chain is Photosystem II reaction center protein M (38 aa).

The chain crosses the membrane as a helical span at residues 5-25; the sequence is ILGLIATALFIVIPTSFLLIL.

This sequence belongs to the PsbM family. In terms of assembly, PSII is composed of 1 copy each of membrane proteins PsbA, PsbB, PsbC, PsbD, PsbE, PsbF, PsbH, PsbI, PsbJ, PsbK, PsbL, PsbM, PsbT, PsbX, PsbY, PsbZ, Psb30/Ycf12, at least 3 peripheral proteins of the oxygen-evolving complex and a large number of cofactors. It forms dimeric complexes.

Its subcellular location is the plastid. The protein localises to the cyanelle thylakoid membrane. In terms of biological role, one of the components of the core complex of photosystem II (PSII). PSII is a light-driven water:plastoquinone oxidoreductase that uses light energy to abstract electrons from H(2)O, generating O(2) and a proton gradient subsequently used for ATP formation. It consists of a core antenna complex that captures photons, and an electron transfer chain that converts photonic excitation into a charge separation. This subunit is found at the monomer-monomer interface. The polypeptide is Photosystem II reaction center protein M (Cyanophora paradoxa).